The sequence spans 165 residues: Large ribosomal subunit protein uL10 (165 aa).

It belongs to the universal ribosomal protein uL10 family. Part of the ribosomal stalk of the 50S ribosomal subunit. The N-terminus interacts with L11 and the large rRNA to form the base of the stalk. The C-terminus forms an elongated spine to which L12 dimers bind in a sequential fashion forming a multimeric L10(L12)X complex.

Forms part of the ribosomal stalk, playing a central role in the interaction of the ribosome with GTP-bound translation factors. The protein is Large ribosomal subunit protein uL10 of Pectobacterium carotovorum subsp. carotovorum (strain PC1).